A 314-amino-acid polypeptide reads, in one-letter code: GTP cyclohydrolase FolE2 (314 aa).

The tract at residues 290–314 is disordered; that stretch reads DASAWSAPQASAPDQQESFATGNER. Residues 291–305 are compositionally biased toward low complexity; sequence ASAWSAPQASAPDQQ.

Belongs to the GTP cyclohydrolase IV family.

It catalyses the reaction GTP + H2O = 7,8-dihydroneopterin 3'-triphosphate + formate + H(+). Its pathway is cofactor biosynthesis; 7,8-dihydroneopterin triphosphate biosynthesis; 7,8-dihydroneopterin triphosphate from GTP: step 1/1. Converts GTP to 7,8-dihydroneopterin triphosphate. This is GTP cyclohydrolase FolE2 from Pseudomonas putida (strain ATCC 700007 / DSM 6899 / JCM 31910 / BCRC 17059 / LMG 24140 / F1).